The chain runs to 415 residues: Lipoyl synthase, apicoplast (415 aa).

An N-terminal signal peptide occupies residues 1 to 23 (MHFGIPSLFYLYILFSIIMRIKC). [4Fe-4S] cluster-binding residues include Cys-153, Cys-158, Cys-164, Cys-179, Cys-183, Cys-186, and Ser-394. A Radical SAM core domain is found at 165–383 (WNIGTATIML…KEEGLKMGFK (219 aa)).

This sequence belongs to the radical SAM superfamily. Lipoyl synthase family. [4Fe-4S] cluster serves as cofactor.

It is found in the plastid. The protein localises to the apicoplast. The catalysed reaction is [[Fe-S] cluster scaffold protein carrying a second [4Fe-4S](2+) cluster] + N(6)-octanoyl-L-lysyl-[protein] + 2 oxidized [2Fe-2S]-[ferredoxin] + 2 S-adenosyl-L-methionine + 4 H(+) = [[Fe-S] cluster scaffold protein] + N(6)-[(R)-dihydrolipoyl]-L-lysyl-[protein] + 4 Fe(3+) + 2 hydrogen sulfide + 2 5'-deoxyadenosine + 2 L-methionine + 2 reduced [2Fe-2S]-[ferredoxin]. It functions in the pathway protein modification; protein lipoylation via endogenous pathway; protein N(6)-(lipoyl)lysine from octanoyl-[acyl-carrier-protein]: step 2/2. Catalyzes the radical-mediated insertion of two sulfur atoms into the C-6 and C-8 positions of the octanoyl moiety bound to the lipoyl domains of lipoate-dependent enzymes, thereby converting the octanoylated domains into lipoylated derivatives. This Plasmodium falciparum (isolate 3D7) protein is Lipoyl synthase, apicoplast.